Reading from the N-terminus, the 431-residue chain is Histidine--tRNA ligase (431 aa).

The disordered stretch occupies residues 1–20 (MALQRPKGTQDHLPDGSPKL).

Belongs to the class-II aminoacyl-tRNA synthetase family. In terms of assembly, homodimer.

Its subcellular location is the cytoplasm. The catalysed reaction is tRNA(His) + L-histidine + ATP = L-histidyl-tRNA(His) + AMP + diphosphate + H(+). This is Histidine--tRNA ligase from Deinococcus geothermalis (strain DSM 11300 / CIP 105573 / AG-3a).